Reading from the N-terminus, the 78-residue chain is MKTLLLTLVVVTIVCLDFGYTIVCYKRHASDSQTTTCLSGICYKKITRGISRPEMGCGCPQSSRGVKVECCMRDKCNG.

The N-terminal stretch at M1–T21 is a signal peptide. Intrachain disulfides connect C24-C42, C37-C57, C59-C70, and C71-C76.

Belongs to the three-finger toxin family. Short-chain subfamily. Orphan group XII sub-subfamily. In terms of tissue distribution, expressed by the venom gland.

The protein localises to the secreted. The polypeptide is Alpha-neurotoxin homolog 1 (Micrurus corallinus (Brazilian coral snake)).